A 349-amino-acid chain; its full sequence is tRNA pseudouridine synthase D (349 aa).

F27 lines the substrate pocket. D80 (nucleophile) is an active-site residue. N129 provides a ligand contact to substrate. A TRUD domain is found at 155-303 (GVPNYFGAQR…VEAARRAMLL (149 aa)). F329 serves as a coordination point for substrate.

It belongs to the pseudouridine synthase TruD family.

It catalyses the reaction uridine(13) in tRNA = pseudouridine(13) in tRNA. In terms of biological role, responsible for synthesis of pseudouridine from uracil-13 in transfer RNAs. The protein is tRNA pseudouridine synthase D of Escherichia coli (strain K12 / MC4100 / BW2952).